The following is a 351-amino-acid chain: MSGIVTYGSYIPRYRIRPEEIARVWGEDPEKMKNGIFILSKSVPGPDEDVATISVEAARNALKRSNIDPNDIGAIYIGSESHPYAVKPTATIVAAAIGMPFRTFAADYEFACKAGTAAMQNIKAMVDSNMIKYGMAIGSDTSQGAPGDALEYTASAGGTAMVIGRDNVIAEINKTISVATDTPDFWRREGEPYPKHGERFTGEPGYFKHVIGAARDIMSELNTKPDDYDYVVFHQPNGKFPTRAAKILGFREEQYREGLITPYIGNTYSGSTMTGLSAILDVSRPGDRILAVSFGSGAGSDAFDITVTDNILDYHRENAPGVRKMMESTEYIDYAVYSKFRKILVFGDNLE.

Asp28 is a binding site for (3S)-3-hydroxy-3-methylglutaryl-CoA. Glu80 functions as the Proton donor/acceptor in the catalytic mechanism. Residues Cys112 and Thr153 each coordinate (3S)-3-hydroxy-3-methylglutaryl-CoA. Residue Cys112 is the Acyl-thioester intermediate of the active site. Position 199 (Arg199) interacts with CoA. 2 residues coordinate (3S)-3-hydroxy-3-methylglutaryl-CoA: Thr201 and His234. Catalysis depends on His234, which acts as the Proton donor/acceptor. Lys239 is a binding site for CoA. (3S)-3-hydroxy-3-methylglutaryl-CoA is bound by residues Arg243, Asn266, and Ser296.

It belongs to the thiolase-like superfamily. Archaeal HMG-CoA synthase family. In terms of assembly, interacts with acetoacetyl-CoA thiolase that catalyzes the precedent step in the pathway and with a DUF35 protein. The acetoacetyl-CoA thiolase/HMG-CoA synthase complex channels the intermediate via a fused CoA-binding site, which allows for efficient coupling of the endergonic thiolase reaction with the exergonic HMGCS reaction.

The catalysed reaction is acetoacetyl-CoA + acetyl-CoA + H2O = (3S)-3-hydroxy-3-methylglutaryl-CoA + CoA + H(+). It functions in the pathway metabolic intermediate biosynthesis; (R)-mevalonate biosynthesis; (R)-mevalonate from acetyl-CoA: step 2/3. Its function is as follows. Catalyzes the condensation of acetyl-CoA with acetoacetyl-CoA to form 3-hydroxy-3-methylglutaryl-CoA (HMG-CoA). Functions in the mevalonate (MVA) pathway leading to isopentenyl diphosphate (IPP), a key precursor for the biosynthesis of isoprenoid compounds that are building blocks of archaeal membrane lipids. In Picrophilus torridus (strain ATCC 700027 / DSM 9790 / JCM 10055 / NBRC 100828 / KAW 2/3), this protein is Hydroxymethylglutaryl-CoA synthase.